The sequence spans 168 residues: G/U mismatch-specific DNA glycosylase (168 aa).

This sequence belongs to the uracil-DNA glycosylase (UDG) superfamily. TDG/mug family. In terms of assembly, binds DNA as a monomer.

Its subcellular location is the cytoplasm. It catalyses the reaction Specifically hydrolyzes mismatched double-stranded DNA and polynucleotides, releasing free uracil.. Its function is as follows. Excises ethenocytosine and uracil, which can arise by alkylation or deamination of cytosine, respectively, from the corresponding mispairs with guanine in ds-DNA. It is capable of hydrolyzing the carbon-nitrogen bond between the sugar-phosphate backbone of the DNA and the mispaired base. The complementary strand guanine functions in substrate recognition. Required for DNA damage lesion repair in stationary-phase cells. The polypeptide is G/U mismatch-specific DNA glycosylase (Escherichia coli O9:H4 (strain HS)).